The following is a 178-amino-acid chain: uncharacterized protein (178 aa).

The region spanning 52-177 (HIAIEDRAHQ…RRLPASFLST (126 aa)) is the MSP domain.

This is an uncharacterized protein from Caenorhabditis elegans.